Here is a 262-residue protein sequence, read N- to C-terminus: Triosephosphate isomerase (262 aa).

9–11 (NWK) provides a ligand contact to substrate. The Electrophile role is filled by histidine 99. Glutamate 171 acts as the Proton acceptor in catalysis. Residues glycine 177 and serine 216 each contribute to the substrate site.

It belongs to the triosephosphate isomerase family. Homodimer.

Its subcellular location is the cytoplasm. The enzyme catalyses D-glyceraldehyde 3-phosphate = dihydroxyacetone phosphate. It functions in the pathway carbohydrate biosynthesis; gluconeogenesis. Its pathway is carbohydrate degradation; glycolysis; D-glyceraldehyde 3-phosphate from glycerone phosphate: step 1/1. Involved in the gluconeogenesis. Catalyzes stereospecifically the conversion of dihydroxyacetone phosphate (DHAP) to D-glyceraldehyde-3-phosphate (G3P). The chain is Triosephosphate isomerase from Blochmanniella floridana.